Reading from the N-terminus, the 175-residue chain is MYLARTRFLFFLASLACASIIGTAFYLQQTFGLDPCFLCLIQRAAIIACGVLALCAACHAPGPTGMRRYSLGFLLIALTGLVTAGAQVWLQTASADQLIPFITKLEHLLSLLSLDMCIDRLRSDAMFCAEITWTLFGISLPEWSLLAFTGLALLPLYPLFSEFSHWLATKDRARY.

The Cytoplasmic segment spans residues M1–L9. Residues F10–Y26 traverse the membrane as a helical segment. Topologically, residues L27–A44 are periplasmic. Residues C36 and C39 are joined by a disulfide bond. Residues A45–P61 form a helical membrane-spanning segment. Topologically, residues G62 to R68 are cytoplasmic. A helical transmembrane segment spans residues Y69–G85. The Periplasmic portion of the chain corresponds to A86 to E142. A helical membrane pass occupies residues W143 to S161. Residues E162–Y175 lie on the Cytoplasmic side of the membrane.

This sequence belongs to the DsbB family.

Its subcellular location is the cell inner membrane. In terms of biological role, required for disulfide bond formation in some periplasmic proteins. Acts by oxidizing the DsbA protein. The protein is Disulfide bond formation protein B 2 of Pseudomonas savastanoi pv. phaseolicola (strain 1448A / Race 6) (Pseudomonas syringae pv. phaseolicola (strain 1448A / Race 6)).